A 425-amino-acid polypeptide reads, in one-letter code: MSETTSILIKDTTILSDKIKKASILIVDNTIEEISNDLSVTDASKVIDGTNKITMPGLVNTHSHVAMTLLRGVGDDEELQTWLNDYIWPKEAKLDEKLVYAGSKLAMAEMIKTGTTTFNDMYFYMEETAKAVEESGIRGVLGYGMIDLFDDEKRKQEIKATKNLIKNSHNTANGRVQVAVAPHAPYTCSKELLSESKKLANKHNLKLHIHVSETQQEVNDLEKQRNQTPFEYLDSIDLLDENTIAAHGVWTTDNEMKLLKEKQVSISHNPSSNMKLASGIAPVSKYIKNDINVAIGTDGVSSNNNLDMFSEMKLTALLQKVNTMNAKTLPAQATFNMATENGARALGINTGSIKEGKLADIVLVNMNVPHMIPVRNPLSNIIYSALGSDVDTVICDGQLLLEDKKLLTINEEDAIYDAKLAAQQL.

Residues histidine 62 and histidine 64 each coordinate Zn(2+). Residues glutamate 91 and histidine 183 each coordinate substrate. A Zn(2+)-binding site is contributed by histidine 210. Positions 213 and 298 each coordinate substrate. A Zn(2+)-binding site is contributed by aspartate 298.

This sequence belongs to the metallo-dependent hydrolases superfamily. MTA/SAH deaminase family. Homotetramer. Zn(2+) is required as a cofactor.

It carries out the reaction 5'-deoxyadenosine + H2O + H(+) = 5'-deoxyinosine + NH4(+). It catalyses the reaction S-adenosyl-L-homocysteine + H2O + H(+) = S-inosyl-L-homocysteine + NH4(+). The catalysed reaction is S-methyl-5'-thioadenosine + H2O + H(+) = S-methyl-5'-thioinosine + NH4(+). The enzyme catalyses adenosine + H2O + H(+) = inosine + NH4(+). Its pathway is amino-acid biosynthesis; S-adenosyl-L-methionine biosynthesis. Its function is as follows. Catalyzes the deamination of three SAM-derived enzymatic products, namely 5'-deoxyadenosine, S-adenosyl-L-homocysteine, and 5'-methylthioadenosine, to produce the inosine analogs. Can also deaminate adenosine. The preferred substrate for this enzyme is 5'-deoxyadenosine, but all these substrates are efficiently deaminated. Likely functions in a S-adenosyl-L-methionine (SAM) recycling pathway from S-adenosyl-L-homocysteine (SAH) produced from SAM-dependent methylation reactions. May also be involved in the recycling of 5'-deoxyadenosine, whereupon the 5'-deoxyribose moiety of 5'-deoxyinosine is further metabolized to deoxyhexoses used for the biosynthesis of aromatic amino acids in methanogens. In Methanosphaera stadtmanae (strain ATCC 43021 / DSM 3091 / JCM 11832 / MCB-3), this protein is 5'-deoxyadenosine deaminase.